Here is a 237-residue protein sequence, read N- to C-terminus: Protein GrpE (237 aa).

Residues 1 to 65 are disordered; that stretch reads MTDSYKLPDN…DAREDDRDPT (65 aa). Over residues 55-65 the composition is skewed to basic and acidic residues; that stretch reads VDAREDDRDPT.

It belongs to the GrpE family. In terms of assembly, homodimer.

Its subcellular location is the cytoplasm. In terms of biological role, participates actively in the response to hyperosmotic and heat shock by preventing the aggregation of stress-denatured proteins, in association with DnaK and GrpE. It is the nucleotide exchange factor for DnaK and may function as a thermosensor. Unfolded proteins bind initially to DnaJ; upon interaction with the DnaJ-bound protein, DnaK hydrolyzes its bound ATP, resulting in the formation of a stable complex. GrpE releases ADP from DnaK; ATP binding to DnaK triggers the release of the substrate protein, thus completing the reaction cycle. Several rounds of ATP-dependent interactions between DnaJ, DnaK and GrpE are required for fully efficient folding. This chain is Protein GrpE, found in Corynebacterium efficiens (strain DSM 44549 / YS-314 / AJ 12310 / JCM 11189 / NBRC 100395).